We begin with the raw amino-acid sequence, 878 residues long: DNA mismatch repair protein MutS (878 aa).

630–637 serves as a coordination point for ATP; sequence GPNMAGKS.

The protein belongs to the DNA mismatch repair MutS family.

This protein is involved in the repair of mismatches in DNA. It is possible that it carries out the mismatch recognition step. This protein has a weak ATPase activity. This chain is DNA mismatch repair protein MutS, found in Chlorobaculum tepidum (strain ATCC 49652 / DSM 12025 / NBRC 103806 / TLS) (Chlorobium tepidum).